Here is a 305-residue protein sequence, read N- to C-terminus: NAD-dependent protein deacylase SIR4 (305 aa).

Residues Met1 to Val10 constitute a mitochondrion transit peptide. Residues Met11–Arg305 enclose the Deacetylase sirtuin-type domain. NAD(+) contacts are provided by residues Gly37 to Ser57 and Gln118 to Asp121. The active-site Proton acceptor is His139. 4 residues coordinate Zn(2+): Cys147, Cys150, Cys209, and Cys212. NAD(+) is bound by residues Gly249–Ser251, Asn275–Gly277, and Ser293.

Belongs to the sirtuin family. Class II subfamily. Zn(2+) is required as a cofactor.

The protein localises to the mitochondrion matrix. The catalysed reaction is N(6)-acetyl-L-lysyl-[protein] + NAD(+) + H2O = 2''-O-acetyl-ADP-D-ribose + nicotinamide + L-lysyl-[protein]. Its function is as follows. NAD-dependent protein deacylase. Catalyzes the NAD-dependent hydrolysis of acyl groups from lysine residues. The sequence is that of NAD-dependent protein deacylase SIR4 from Batrachochytrium dendrobatidis (strain JAM81 / FGSC 10211) (Frog chytrid fungus).